The following is a 176-amino-acid chain: I-Kappa-B like protein G1 (176 aa).

ANK repeat units lie at residues 56 to 88 (EGRQ…DINS), 93 to 123 (FGNT…ELGA), and 127 to 156 (LYKT…VCDD).

This sequence belongs to the polydnaviridae I-Kappa-B-like protein family.

Its function is as follows. Suppresses the host immune response through NF-kappa-B inactivation. Possesses ankyrin repeat domains required for NF-kappa-B binding but lacks the regulatory regions required for dissociation from NF-kappa-B and degradation. Therefore, prevents host NF-kappa-B release and subsequent activation. The sequence is that of I-Kappa-B like protein G1 (G3) from Microplitis demolitor (Parasitoid wasp).